The sequence spans 515 residues: MKKKILLMMSLISVFFAWQLTQAKQVLAEGKVKVVTTFYPVYEFTKGVIGNDGDVSMLMKAGTEPHDFEPSTKDIKKIQDADAFVYMDDNMETWVSDVKKSLTSKKVTIVKGTGNMLLVAGAGHDHHHEDADKKHEHNKHSEEGHNHAFDPHVWLSPYRSITVVENIRDSLSKAYPEKAENFKANAATYIEKLKELDKDYTAALSDAKQKSFVTQHAAFGYMALDYGLNQISINGVTPDAEPSAKRIATLSKYVKKYGIKYIYFEENASSKVAKTLAKEAGVKAAVLSPLEGLTEKEMKAGQDYFTVMRKNLETLRLTTDVAGKEILPEKDTTKTVYNGYFKDKEVKDRQLSDWSGSWQSVYPYLQDGTLDQVWDYKAKKSKGKMTAAEYKDYYTTGYKTDVEQIKINGKKKTMTFVRNGEKKTFTYTYAGKEILTYPKGNRGVRFMFEAKEPNAGEFKYVQFSDHAIAPEKAEHFHLYWGGDSQEKLHKELEHWPTYYGSDLSGREIAQEINAH.

A signal peptide spans 1 to 28; the sequence is MKKKILLMMSLISVFFAWQLTQAKQVLA. His66 contributes to the Zn(2+) binding site. The interval 125–148 is disordered; it reads DHHHEDADKKHEHNKHSEEGHNHA. The tract at residues 129–148 is his-rich loop; it reads EDADKKHEHNKHSEEGHNHA. Zn(2+) contacts are provided by His152, His216, and Glu291.

It belongs to the bacterial solute-binding protein 9 family.

In terms of biological role, part of the ATP-binding cassette (ABC) transport system AdcABC involved in zinc import. Binds zinc with high affinity and specificity and delivers it to the membrane permease for translocation into the cytoplasm. In Streptococcus pyogenes serotype M6 (strain ATCC BAA-946 / MGAS10394), this protein is Zinc-binding protein AdcA (adcA).